The chain runs to 721 residues: Polyribonucleotide nucleotidyltransferase (721 aa).

Positions 495 and 501 each coordinate Mg(2+). A KH domain is found at 562–621; the sequence is PRLLSFRIDPELIGTVIGPGGRTIKGITERTNTKIDIEDSGIVTIASHDGAAADEAQKII. Residues 631–699 enclose the S1 motif domain; that stretch reads GEVFSGAITR…NRGRINLTLR (69 aa). Residues 700–721 are disordered; it reads GVPQNGEEAEPAPAPTPVAPLN. Pro residues predominate over residues 711–721; that stretch reads APAPTPVAPLN.

It belongs to the polyribonucleotide nucleotidyltransferase family. The cofactor is Mg(2+).

It localises to the cytoplasm. The enzyme catalyses RNA(n+1) + phosphate = RNA(n) + a ribonucleoside 5'-diphosphate. In terms of biological role, involved in mRNA degradation. Catalyzes the phosphorolysis of single-stranded polyribonucleotides processively in the 3'- to 5'-direction. The polypeptide is Polyribonucleotide nucleotidyltransferase (Synechococcus sp. (strain WH7803)).